The following is a 146-amino-acid chain: Globin (146 aa).

At S1 the chain carries N-acetylserine. In terms of domain architecture, Globin spans 1–146; it reads SLSGAEADLL…IIDALKKAGK (146 aa). H95 is a heme b binding site.

It belongs to the globin family. As to quaternary structure, monomer.

The sequence is that of Globin from Bursatella leachii (Ragged sea hare).